A 355-amino-acid chain; its full sequence is 3-dehydroquinate synthase (355 aa).

Residues 105–109 (GVVGD), 129–130 (TS), K142, K151, and 169–172 (TLKT) contribute to the NAD(+) site. Residues E184, H246, and H263 each contribute to the Zn(2+) site.

The protein belongs to the sugar phosphate cyclases superfamily. Dehydroquinate synthase family. NAD(+) serves as cofactor. The cofactor is Co(2+). Zn(2+) is required as a cofactor.

It localises to the cytoplasm. It carries out the reaction 7-phospho-2-dehydro-3-deoxy-D-arabino-heptonate = 3-dehydroquinate + phosphate. The protein operates within metabolic intermediate biosynthesis; chorismate biosynthesis; chorismate from D-erythrose 4-phosphate and phosphoenolpyruvate: step 2/7. Functionally, catalyzes the conversion of 3-deoxy-D-arabino-heptulosonate 7-phosphate (DAHP) to dehydroquinate (DHQ). This chain is 3-dehydroquinate synthase, found in Streptococcus agalactiae serotype III (strain NEM316).